A 151-amino-acid chain; its full sequence is Small ribosomal subunit protein uS15 (151 aa).

Positions 1-11 (MPHRSRHKKGR) are enriched in basic residues. The tract at residues 1–24 (MPHRSRHKKGRSSSVRPPHPTVPT) is disordered.

Belongs to the universal ribosomal protein uS15 family. As to quaternary structure, part of the 30S ribosomal subunit.

The polypeptide is Small ribosomal subunit protein uS15 (Pyrobaculum calidifontis (strain DSM 21063 / JCM 11548 / VA1)).